The following is a 381-amino-acid chain: Succinyl-diaminopimelate desuccinylase (381 aa).

His71 is a binding site for Zn(2+). The active site involves Asp73. Position 104 (Asp104) interacts with Zn(2+). The active-site Proton acceptor is the Glu138. Zn(2+) is bound by residues Glu139, Glu167, and His353.

The protein belongs to the peptidase M20A family. DapE subfamily. In terms of assembly, homodimer. Zn(2+) is required as a cofactor. The cofactor is Co(2+).

It carries out the reaction N-succinyl-(2S,6S)-2,6-diaminopimelate + H2O = (2S,6S)-2,6-diaminopimelate + succinate. It functions in the pathway amino-acid biosynthesis; L-lysine biosynthesis via DAP pathway; LL-2,6-diaminopimelate from (S)-tetrahydrodipicolinate (succinylase route): step 3/3. Catalyzes the hydrolysis of N-succinyl-L,L-diaminopimelic acid (SDAP), forming succinate and LL-2,6-diaminopimelate (DAP), an intermediate involved in the bacterial biosynthesis of lysine and meso-diaminopimelic acid, an essential component of bacterial cell walls. This is Succinyl-diaminopimelate desuccinylase from Shewanella halifaxensis (strain HAW-EB4).